We begin with the raw amino-acid sequence, 339 residues long: Very-long-chain 3-oxoacyl-CoA reductase (339 aa).

The chain crosses the membrane as a helical span at residues 19 to 39 (VALFLLSIGGLFTACKLFSFC). Residues L64, K105, D119, D127, N146, Y213, K217, V246, and S248 each contribute to the NADP(+) site. Y213 acts as the Proton donor in catalysis. The Lowers pKa of active site Tyr role is filled by K217.

This sequence belongs to the short-chain dehydrogenases/reductases (SDR) family.

The protein localises to the endoplasmic reticulum membrane. It carries out the reaction a very-long-chain (3R)-3-hydroxyacyl-CoA + NADP(+) = a very-long-chain 3-oxoacyl-CoA + NADPH + H(+). It participates in lipid metabolism; fatty acid biosynthesis. Functionally, component of the microsomal membrane bound fatty acid elongation system, which produces the 26-carbon very long-chain fatty acids (VLCFA) from palmitate. Catalyzes the reduction of the 3-ketoacyl-CoA intermediate that is formed in each cycle of fatty acid elongation. VLCFAs serve as precursors for ceramide and sphingolipids. The polypeptide is Very-long-chain 3-oxoacyl-CoA reductase (Ajellomyces capsulatus (strain NAm1 / WU24) (Darling's disease fungus)).